Here is a 106-residue protein sequence, read N- to C-terminus: Hydrogenase expression/formation protein HoxL (106 aa).

Belongs to the HupF/HypC family.

The sequence is that of Hydrogenase expression/formation protein HoxL (hoxL) from Azotobacter vinelandii.